The chain runs to 554 residues: Glucose-6-phosphate isomerase (554 aa).

Glutamate 359 serves as the catalytic Proton donor. Active-site residues include histidine 390 and lysine 518.

It belongs to the GPI family.

The protein localises to the cytoplasm. The enzyme catalyses alpha-D-glucose 6-phosphate = beta-D-fructose 6-phosphate. It functions in the pathway carbohydrate biosynthesis; gluconeogenesis. Its pathway is carbohydrate degradation; glycolysis; D-glyceraldehyde 3-phosphate and glycerone phosphate from D-glucose: step 2/4. Catalyzes the reversible isomerization of glucose-6-phosphate to fructose-6-phosphate. The chain is Glucose-6-phosphate isomerase from Pseudomonas putida (strain GB-1).